We begin with the raw amino-acid sequence, 737 residues long: Relaxin receptor 2 (737 aa).

Residues 1-399 (MWLLLHVILL…SSSEDLLANG (399 aa)) lie on the Extracellular side of the membrane. Residues 27 to 64 (LCPKGYFPCGNLTKCLPRAFHCDGVDDCGNGADEDNCG) form the LDL-receptor class A domain. 3 disulfides stabilise this stretch: C28-C41, C35-C54, and C48-C63. A glycan (N-linked (GlcNAc...) asparagine) is linked at N37. The N-linked (GlcNAc...) asparagine glycan is linked to N121. LRR repeat units lie at residues 121-142 (NVTL…VFSR), 145-166 (ELRK…AFLG), 169-190 (NLQI…IFKD), 193-214 (QLAW…SFMG), 217-238 (SLFF…LCAQ), 241-262 (QLNW…TFLT), 265-286 (SLTV…TFSS), 289-310 (NLGE…LFSD), 313-334 (LLQK…QFGS), and 337-358 (QLQS…MFQP). N257 is a glycosylation site (N-linked (GlcNAc...) asparagine). N-linked (GlcNAc...) asparagine glycans are attached at residues N318, N350, and N361. A helical membrane pass occupies residues 400-420 (ILRVSVWVIAFITCVGNFLVI). At 421 to 438 (AVRSLIKAENTTHAMSIK) the chain is on the cytoplasmic side. A helical membrane pass occupies residues 439–459 (ILCCADCLMGVYLFSVGVFDI). Residues 460–478 (KYRGQYQKYALLWMESVPC) lie on the Extracellular side of the membrane. An intrachain disulfide couples C478 to C556. The helical transmembrane segment at 479–501 (RLLGFLATLSTEVSVLLLTFLTL) threads the bilayer. The Cytoplasmic segment spans residues 502–520 (EKFLVIVFPFSNLRLGKRQ). A helical transmembrane segment spans residues 521–541 (TAVALASIWVVGFLIAAVPFT). Residues 542–575 (REDYFGNFYGKNGVCFPLHYDQAEDFGSRGYSLG) are Extracellular-facing. The helical transmembrane segment at 576 to 596 (IFLGVNLLAFLVIVISYVTMF) threads the bilayer. Topologically, residues 597–622 (CSIHKTALQTAEVRSHIGKEVAVANR) are cytoplasmic. The helical transmembrane segment at 623–643 (FFFIVFSDAICWIPVFVVKIL) threads the bilayer. Topologically, residues 644-653 (SLLQVEIPGT) are extracellular. The chain crosses the membrane as a helical span at residues 654-674 (ITSWIVVFFLPVNSALNPILY). Topologically, residues 675-737 (TLTTSFFKDK…GDSIMKPVSP (63 aa)) are cytoplasmic.

The protein belongs to the G-protein coupled receptor 1 family. In terms of tissue distribution, expressed in embryonic and adult gonads of males and females, as well in male gubernarculum. Expressed also in brain. Not detected in kidney, spleen and heart.

The protein resides in the cell membrane. Functionally, receptor for relaxin. The activity of this receptor is mediated by G proteins leading to stimulation of adenylate cyclase and an increase of cAMP. May also be a receptor for Leydig insulin-like peptide (INSL3). The sequence is that of Relaxin receptor 2 (Rxfp2) from Mus musculus (Mouse).